Reading from the N-terminus, the 69-residue chain is MKKLFIVMIKFYRKYISPLKRPCCRFYPTCSQYALEAIQKYGAFKGGFMSIGRILRCNPFCKGGYDPVK.

It belongs to the UPF0161 family.

The protein resides in the cell membrane. Could be involved in insertion of integral membrane proteins into the membrane. The chain is Putative membrane protein insertion efficiency factor from Clostridium perfringens (strain SM101 / Type A).